We begin with the raw amino-acid sequence, 587 residues long: Bifunctional lycopene cyclase/phytoene synthase (587 aa).

A lycopene beta-cyclase region spans residues 1–236; the sequence is MGLDYILVHV…IVFGLVCIDY (236 aa). 7 consecutive transmembrane segments (helical) span residues 5–25, 35–55, 65–85, 91–111, 116–136, 145–165, and 218–238; these read YILV…LVYW, KIST…SYLV, NGVI…FFII, SLVY…GTVA, LIGA…LCFG, IITW…GFII, and LFFL…DYAI. The tract at residues 243-587 is phytoene synthase; the sequence is CELVQSPQAV…VAYRAMAWRK (345 aa).

The protein in the N-terminal section; belongs to the lycopene beta-cyclase family. It in the C-terminal section; belongs to the phytoene/squalene synthase family.

It is found in the membrane. It catalyses the reaction all-trans-lycopene = gamma-carotene. The catalysed reaction is gamma-carotene = all-trans-beta-carotene. The enzyme catalyses 2 (2E,6E,10E)-geranylgeranyl diphosphate = 15-cis-phytoene + 2 diphosphate. Its pathway is carotenoid biosynthesis; beta-carotene biosynthesis. It functions in the pathway carotenoid biosynthesis; phytoene biosynthesis; all-trans-phytoene from geranylgeranyl diphosphate: step 1/1. Its function is as follows. Bifunctional enzyme that catalyzes the reactions from geranylgeranyl diphosphate to phytoene (phytoene synthase) and lycopene to beta-carotene via the intermediate gamma-carotene (lycopene cyclase). The sequence is that of Bifunctional lycopene cyclase/phytoene synthase from Aspergillus oryzae (strain ATCC 42149 / RIB 40) (Yellow koji mold).